The following is a 295-amino-acid chain: G1/S-specific cyclin-D1 (295 aa).

Positions 28–152 (LRAMLKAEET…LLVNKLKWNL (125 aa)) constitute a Cyclin N-terminal domain. The disordered stretch occupies residues 262–295 (AQQNMDPKAAEEEEEEEEEVDLACTPTDVRDVDI). A Glycyl lysine isopeptide (Lys-Gly) (interchain with G-Cter in ubiquitin) cross-link involves residue K269. Residues 272 to 282 (EEEEEEEEEVD) show a composition bias toward acidic residues. Phosphothreonine is present on T286.

This sequence belongs to the cyclin family. Cyclin D subfamily. As to quaternary structure, interacts with either CDK4 or CDK6 protein kinase to form a serine/threonine kinase holoenzyme complex. The cyclin subunit imparts substrate specificity to the complex. Component of the ternary complex CCND1/CDK4/CDKN1B required for nuclear translocation and modulation of CDK4-mediated kinase activity. Interacts directly with CDKN1B. Can form similar complexes with either CDKN1A or CDKN2A. Interacts with UHRF2; the interaction ubiquitinates CCND1 and appears to occur independently of phosphorylation. Interacts with USP2. Interacts (via cyclin N-terminal domain) with INSM1 (via N-terminal region); the interaction competes with the binding of CCND1 to CDK4 during cell cycle progression and inhibits CDK4 activity. Interacts with CDK4; the interaction is prevented with the binding of CCND1 to INSM1 during cell cycle progression. Post-translationally, phosphorylation at Thr-286 by MAP kinases is required for ubiquitination and degradation by the DCX(AMBRA1) complex. It also plays an essential role for recognition by the FBXO31 component of SCF (SKP1-cullin-F-box) protein ligase complex following DNA damage. Ubiquitinated at Lys-269 by the DCX(AMBRA1) complex during the transition from G1 to S cell phase, leading to its degradation: ubiquitination is dependent on Thr-286 phosphorylation. The DCX(AMBRA1) complex represents the major regulator of CCND1 stability during the G1/S transition. Also ubiquitinated by the SCF(FBXO4) and Cul7-RING(FBXW8) ubiquitin-protein ligase complexes. Following DNA damage it is ubiquitinated by the SCF(FBXO31) protein ligase complex. SCF(FBXO31) ubiquitination is dependent on Thr-286 phosphorylation. Ubiquitinated also by UHRF2 apparently in a phosphorylation-independent manner. Ubiquitination leads to its degradation and G1 arrest. Deubiquitinated by USP2; leading to its stabilization.

It is found in the nucleus. The protein localises to the cytoplasm. Its subcellular location is the nucleus membrane. Functionally, regulatory component of the cyclin D1-CDK4 (DC) complex that phosphorylates and inhibits members of the retinoblastoma (RB) protein family including RB1 and regulates the cell-cycle during G(1)/S transition. Phosphorylation of RB1 allows dissociation of the transcription factor E2F from the RB/E2F complex and the subsequent transcription of E2F target genes which are responsible for the progression through the G(1) phase. Hypophosphorylates RB1 in early G(1) phase. Cyclin D-CDK4 complexes are major integrators of various mitogenenic and antimitogenic signals. Also a substrate for SMAD3, phosphorylating SMAD3 in a cell-cycle-dependent manner and repressing its transcriptional activity. Component of the ternary complex, cyclin D1/CDK4/CDKN1B, required for nuclear translocation and activity of the cyclin D-CDK4 complex. Exhibits transcriptional corepressor activity with INSM1 on the NEUROD1 and INS promoters in a cell cycle-independent manner. The polypeptide is G1/S-specific cyclin-D1 (Homo sapiens (Human)).